A 244-amino-acid polypeptide reads, in one-letter code: Gas vesicle protein F (244 aa).

The segment at 1 to 109 (MTVGLYLYGI…QLKELFAKLS (109 aa)) is N-terminus. Residues 110-233 (GQREVSIKIF…GDRLRIRYNN (124 aa)) are C-terminus, modifed ferredoxin fold. The tract at residues 234 to 244 (LTAPYTFAQLI) is C-tail.

The protein belongs to the gas vesicle GvpF/GvpL family. In terms of assembly, binds GvpA.

It is found in the gas vesicle. In terms of biological role, a minor component of the gas vesicle, may be involved in preventing GvpA aggregation during gas vesicle nucleation. Gas vesicles (GV) are hollow, gas filled proteinaceous nanostructures. During planktonic growth they allow positioning of the organism at a favorable depth for light or nutrient acquisition. The polypeptide is Gas vesicle protein F (Microcystis aeruginosa (strain PCC 7806)).